The primary structure comprises 196 residues: uncharacterized protein (196 aa).

This is an uncharacterized protein from Pasteurella multocida (strain Pm70).